We begin with the raw amino-acid sequence, 221 residues long: Glutathione S-transferase (221 aa).

M1 is subject to N-acetylmethionine. A2 is subject to N-acetylalanine; in Glutathione S-transferase, N-terminally processed. Positions 3–82 (GEQNIKYFNI…YIAEKYNLLG (80 aa)) constitute a GST N-terminal domain. Glutathione-binding positions include Y9, K45, 53-54 (QV), and 66-67 (QT). The 125-residue stretch at 84 to 208 (DMKEHAQIIM…PGSKRKPVPD (125 aa)) folds into the GST C-terminal domain.

The protein belongs to the GST superfamily. Alpha family. As to quaternary structure, homodimer or heterodimer of GSTA1 and GSTA2.

The protein resides in the cytoplasm. The catalysed reaction is RX + glutathione = an S-substituted glutathione + a halide anion + H(+). It catalyses the reaction prostaglandin A2 + glutathione = prostaglandin A2-S-(R)-glutathione. The enzyme catalyses prostaglandin J2 + glutathione = prostaglandin J2-S-(R)-glutathione. It carries out the reaction (13S)-hydroperoxy-(9Z,11E)-octadecadienoate + 2 glutathione = (13S)-hydroxy-(9Z,11E)-octadecadienoate + glutathione disulfide + H2O. The catalysed reaction is androst-5-ene-3,17-dione = androst-4-ene-3,17-dione. Glutathione S-transferase that catalyzes the nucleophilic attack of the sulfur atom of glutathione on the electrophilic groups of a wide range of exogenous and endogenous compounds. Involved in the formation of glutathione conjugates of both prostaglandin A2 (PGA2) and prostaglandin J2 (PGJ2). It also catalyzes the isomerization of D5-androstene-3,17-dione (AD) into D4-androstene-3,17-dione and may therefore play an important role in hormone biosynthesis. Through its glutathione-dependent peroxidase activity toward the fatty acid hydroperoxide (13S)-hydroperoxy-(9Z,11E)-octadecadienoate/13-HPODE it is also involved in the metabolism of oxidized linoleic acid. In Antechinus stuartii (Brown marsupial mouse), this protein is Glutathione S-transferase.